The following is a 435-amino-acid chain: MVKCSLIRALMVIAGLIGAAAFTTPANALVTLDLRKGNVQPMPIAVTDFQGDLGAQVSQVIAADLQRSGLFAPINKTAFIEKISNPDAAPRFEDWKVINAQALVTGRVTKEADGRLRAEFRLWDPFAGQQMTGQQFYTQPENWRRVAHIIADAIYKQITGEEGYFDTRVVFVSESGTKQQRKRQLAIMDQDGFNVRMLTDGSDLVLTPRFSPSRQEVTYMSFANQQPRVYLLQLETGQREVVGNFPGMTFSPRFSPDGQKVIMSLQQDANSNIYTMDLRSRTTTRLTSTAAIDTSPSYSPDGARVSFESDRGGKPQIYVMNADGSGQTRISFGDGSYSTPVWSPRGDLIAFTKQAGGKFSIGVMKPDGSGERILTTGFHNEGPTWAPNGRVLMFFRQAAGAGGPQLYSIDLTGYNEQLVKTPSYGSDPAWSPLME.

An N-terminal signal peptide occupies residues 1–28; sequence MVKCSLIRALMVIAGLIGAAAFTTPANA. Residues 288–310 form a disordered region; that stretch reads STAAIDTSPSYSPDGARVSFESD.

Belongs to the TolB family. In terms of assembly, the Tol-Pal system is composed of five core proteins: the inner membrane proteins TolA, TolQ and TolR, the periplasmic protein TolB and the outer membrane protein Pal. They form a network linking the inner and outer membranes and the peptidoglycan layer.

The protein localises to the periplasm. Part of the Tol-Pal system, which plays a role in outer membrane invagination during cell division and is important for maintaining outer membrane integrity. This chain is Tol-Pal system protein TolB, found in Rhizobium leguminosarum bv. trifolii (strain WSM2304).